We begin with the raw amino-acid sequence, 61 residues long: Small ribosomal subunit protein uS14 (61 aa).

Zn(2+) is bound by residues Cys-24, Cys-27, Cys-40, and Cys-43.

The protein belongs to the universal ribosomal protein uS14 family. Zinc-binding uS14 subfamily. In terms of assembly, part of the 30S ribosomal subunit. Contacts proteins S3 and S10. It depends on Zn(2+) as a cofactor.

Functionally, binds 16S rRNA, required for the assembly of 30S particles and may also be responsible for determining the conformation of the 16S rRNA at the A site. This is Small ribosomal subunit protein uS14 from Desulfosudis oleivorans (strain DSM 6200 / JCM 39069 / Hxd3) (Desulfococcus oleovorans).